We begin with the raw amino-acid sequence, 83 residues long: Large ribosomal subunit protein bL31B (83 aa).

The protein belongs to the bacterial ribosomal protein bL31 family. Type B subfamily. As to quaternary structure, part of the 50S ribosomal subunit.

This Tropheryma whipplei (strain TW08/27) (Whipple's bacillus) protein is Large ribosomal subunit protein bL31B.